The sequence spans 401 residues: Probable 2,3-bisphosphoglycerate-independent phosphoglycerate mutase (401 aa).

This sequence belongs to the BPG-independent phosphoglycerate mutase family. A-PGAM subfamily.

It catalyses the reaction (2R)-2-phosphoglycerate = (2R)-3-phosphoglycerate. It functions in the pathway carbohydrate degradation; glycolysis; pyruvate from D-glyceraldehyde 3-phosphate: step 3/5. Catalyzes the interconversion of 2-phosphoglycerate and 3-phosphoglycerate. This Thermotoga maritima (strain ATCC 43589 / DSM 3109 / JCM 10099 / NBRC 100826 / MSB8) protein is Probable 2,3-bisphosphoglycerate-independent phosphoglycerate mutase.